A 254-amino-acid chain; its full sequence is UPF0246 protein Fphi_1075 (254 aa).

It belongs to the UPF0246 family.

The chain is UPF0246 protein Fphi_1075 from Francisella philomiragia subsp. philomiragia (strain ATCC 25017 / CCUG 19701 / FSC 153 / O#319-036).